Reading from the N-terminus, the 190-residue chain is Apolipoprotein M (190 aa).

The N-terminal stretch at 1 to 17 is a signal peptide; the sequence is MFHQVWAALLYLYGLLF. 3 disulfides stabilise this stretch: Cys23–Cys169, Cys95–Cys185, and Cys130–Cys159. Tetradecanoate is bound by residues Glu138 and Arg145.

This sequence belongs to the calycin superfamily. Lipocalin family. Highly divergent. In terms of assembly, interacts with LRP2; LRP2 mediates APOM renal uptake and subsequent lysosomal degradation. As to expression, expressed by the liver; secreted in plasma.

The protein localises to the secreted. In terms of biological role, probably involved in lipid transport. Can bind sphingosine-1-phosphate, myristic acid, palmitic acid and stearic acid, retinol, all-trans-retinoic acid and 9-cis-retinoic acid. This Rattus norvegicus (Rat) protein is Apolipoprotein M (Apom).